The primary structure comprises 212 residues: Probable GTP-binding protein EngB (212 aa).

The 173-residue stretch at Ser-38–Pro-210 folds into the EngB-type G domain. GTP-binding positions include Gly-46–Ser-53, Gly-73–Gln-77, Asp-91–Gly-94, Thr-158–Asp-161, and Val-189–Asn-191. Residues Ser-53 and Thr-75 each coordinate Mg(2+).

Belongs to the TRAFAC class TrmE-Era-EngA-EngB-Septin-like GTPase superfamily. EngB GTPase family. It depends on Mg(2+) as a cofactor.

Its function is as follows. Necessary for normal cell division and for the maintenance of normal septation. The sequence is that of Probable GTP-binding protein EngB from Rickettsia conorii (strain ATCC VR-613 / Malish 7).